Reading from the N-terminus, the 440-residue chain is Chromosomal replication initiator protein DnaA (440 aa).

The segment at 1–74 is domain I, interacts with DnaA modulators; it reads MNPSQILENL…VQSGNKAIIN (74 aa). Residues 74-99 form a domain II region; that stretch reads NIQAQSAKQSNKSTKIDIAHIKAQST. The domain III, AAA+ region stretch occupies residues 100-316; that stretch reads ILNPSFTFDS…GIIISLNAYA (217 aa). ATP contacts are provided by Gly146, Gly148, Lys149, and Thr150. The domain IV, binds dsDNA stretch occupies residues 317–440; that stretch reads TILGQEITLE…KNKILVKSQS (124 aa).

The protein belongs to the DnaA family. In terms of assembly, oligomerizes as a right-handed, spiral filament on DNA at oriC.

It is found in the cytoplasm. Its function is as follows. Plays an essential role in the initiation and regulation of chromosomal replication. ATP-DnaA binds to the origin of replication (oriC) to initiate formation of the DNA replication initiation complex once per cell cycle. Binds the DnaA box (a 9 base pair repeat at the origin) and separates the double-stranded (ds)DNA. Forms a right-handed helical filament on oriC DNA; dsDNA binds to the exterior of the filament while single-stranded (ss)DNA is stabiized in the filament's interior. The ATP-DnaA-oriC complex binds and stabilizes one strand of the AT-rich DNA unwinding element (DUE), permitting loading of DNA polymerase. After initiation quickly degrades to an ADP-DnaA complex that is not apt for DNA replication. Binds acidic phospholipids. This is Chromosomal replication initiator protein DnaA from Campylobacter jejuni (strain RM1221).